Reading from the N-terminus, the 943-residue chain is Isoleucine--tRNA ligase (943 aa).

Positions 58–68 (PYANGSIHIGH) match the 'HIGH' region motif. An L-isoleucyl-5'-AMP-binding site is contributed by glutamate 567. A 'KMSKS' region motif is present at residues 608 to 612 (KMSKS). Residue lysine 611 coordinates ATP. Zn(2+) contacts are provided by cysteine 906, cysteine 909, cysteine 926, and cysteine 929.

This sequence belongs to the class-I aminoacyl-tRNA synthetase family. IleS type 1 subfamily. As to quaternary structure, monomer. Zn(2+) is required as a cofactor.

It is found in the cytoplasm. It catalyses the reaction tRNA(Ile) + L-isoleucine + ATP = L-isoleucyl-tRNA(Ile) + AMP + diphosphate. Functionally, catalyzes the attachment of isoleucine to tRNA(Ile). As IleRS can inadvertently accommodate and process structurally similar amino acids such as valine, to avoid such errors it has two additional distinct tRNA(Ile)-dependent editing activities. One activity is designated as 'pretransfer' editing and involves the hydrolysis of activated Val-AMP. The other activity is designated 'posttransfer' editing and involves deacylation of mischarged Val-tRNA(Ile). This Pseudomonas aeruginosa (strain UCBPP-PA14) protein is Isoleucine--tRNA ligase.